Here is a 57-residue protein sequence, read N- to C-terminus: MAFDKKLLDIVACPVCKGKLEYNKQDNQLICKFDKIAYPINDGIPVLLENKAEPLAE.

The protein belongs to the UPF0434 family.

In Shewanella piezotolerans (strain WP3 / JCM 13877), this protein is UPF0434 protein swp_2279.